The chain runs to 178 residues: MSGGKYVDSEGHLYTVPIREQGNIYKPNNKAMAEEMNEKQVYDAHTKEIDLVNRDPKHLNDDVVKIDFEDVIAEPEGTHSFDGIWKASFTTFTVTKYWFYRLLSALFGIPMALIWGIYFAILSFLHIWAVVPCIKSFLIEIQCISRVYSIYVHTFCDPLFEAIGKIFSNIRINMQKEI.

Ser2 bears the N-acetylserine mark. Ser2 carries the post-translational modification Phosphoserine. Residues 2–94 (SGGKYVDSEG…WKASFTTFTV (93 aa)) are required for homooligomerization. Residues 2-104 (SGGKYVDSEG…TKYWFYRLLS (103 aa)) are Cytoplasmic-facing. Lys5 is subject to N6-acetyllysine; alternate. Lys5 is covalently cross-linked (Glycyl lysine isopeptide (Lys-Gly) (interchain with G-Cter in ubiquitin); alternate). Tyr6 is subject to Phosphotyrosine. A Phosphoserine modification is found at Ser9. Tyr14 is subject to Phosphotyrosine; by ABL1. A Phosphotyrosine modification is found at Tyr25. Glycyl lysine isopeptide (Lys-Gly) (interchain with G-Cter in ubiquitin) cross-links involve residues Lys26, Lys30, Lys39, Lys47, and Lys57. An interaction with CAVIN3 region spans residues 82 to 94 (DGIWKASFTTFTV). Residues 105 to 125 (ALFGIPMALIWGIYFAILSFL) constitute an intramembrane region (helical). The Cytoplasmic portion of the chain corresponds to 126 to 178 (HIWAVVPCIKSFLIEIQCISRVYSIYVHTFCDPLFEAIGKIFSNIRINMQKEI). Positions 131–142 (VPCIKSFLIEIQ) are interacts with SPRY1, SPRY2, SPRY3 and SPRY4. Residues Cys133, Cys143, and Cys156 are each lipidated (S-palmitoyl cysteine). The segment at 149 to 160 (SIYVHTFCDPLF) is interacts with SPRY1, SPRY2, and SPRY4. Residues 167 to 178 (FSNIRINMQKEI) form an interacts with SPRY1, SPRY2, SPRY3 and SPRY4 region.

Belongs to the caveolin family. In terms of assembly, homooligomer. Interacts with GLIPR2. Interacts with NOSTRIN. Interacts with SNAP25 and STX1A. Interacts (via the N-terminus) with DPP4; the interaction is direct. Interacts with CTNNB1, CDH1 and JUP. Interacts with PACSIN2; this interaction induces membrane tubulation. Interacts with SLC7A9. Interacts with BMX and BTK. Interacts with TGFBR1. Interacts with CAVIN3 (via leucine-zipper domain) in a cholesterol-sensitive manner. Interacts with CAVIN1. Interacts with EHD2 in a cholesterol-dependent manner. Forms a ternary complex with UBXN6 and VCP; mediates CAV1 targeting to lysosomes for degradation. Interacts with ABCG1; this interaction regulates ABCG1-mediated cholesterol efflux. Interacts with NEU3; this interaction enhances NEU3 sialidase activity within caveola. Interacts (via C-terminus) with SPRY1, SPRY2 (via C-terminus), SPRY3, and SPRY4. Interacts with IGFBP5; this interaction allows trafficking of IGFBP5 from the plasma membrane to the nucleus. In terms of processing, phosphorylated at Tyr-14 by ABL1 in response to oxidative stress. Ubiquitinated. Undergo monoubiquitination and multi- and/or polyubiquitination. Monoubiquitination of N-terminal lysines promotes integration in a ternary complex with UBXN6 and VCP which promotes oligomeric CAV1 targeting to lysosomes for degradation. Ubiquitinated by ZNRF1; leading to degradation and modulation of the TLR4-mediated immune response.

Its subcellular location is the golgi apparatus membrane. It is found in the cell membrane. It localises to the membrane. The protein localises to the caveola. The protein resides in the membrane raft. In terms of biological role, may act as a scaffolding protein within caveolar membranes. Forms a stable heterooligomeric complex with CAV2 that targets to lipid rafts and drives caveolae formation. Mediates the recruitment of CAVIN proteins (CAVIN1/2/3/4) to the caveolae. Interacts directly with G-protein alpha subunits and can functionally regulate their activity. Involved in the costimulatory signal essential for T-cell receptor (TCR)-mediated T-cell activation. Its binding to DPP4 induces T-cell proliferation and NF-kappa-B activation in a T-cell receptor/CD3-dependent manner. Recruits CTNNB1 to caveolar membranes and may regulate CTNNB1-mediated signaling through the Wnt pathway. Negatively regulates TGFB1-mediated activation of SMAD2/3 by mediating the internalization of TGFBR1 from membrane rafts leading to its subsequent degradation. Binds 20(S)-hydroxycholesterol (20(S)-OHC). The sequence is that of Caveolin-1 (CAV1) from Muntiacus muntjak (Barking deer).